The sequence spans 138 residues: Protein FAM216B (138 aa).

The protein belongs to the FAM216 family.

The polypeptide is Protein FAM216B (Fam216b) (Mus musculus (Mouse)).